The primary structure comprises 444 residues: Adenine permease AdeQ (444 aa).

The Cytoplasmic segment spans residues 1–29 (MNNDNTDYVSNESGTLSRLFKLPQHGTTV). A helical membrane pass occupies residues 30–53 (RTELIAGMTTFLTMVYIVFVNPQI). Over 54–63 (LGAAQMDPKV) the chain is Periplasmic. Residues 64–82 (VFVTTCLIAGIGSIAMGIF) form a helical membrane-spanning segment. Over 83–84 (AN) the chain is Cytoplasmic. Residues 85–101 (LPVALAPAMGLNAFFAF) form a discontinuously helical membrane-spanning segment. Residues 102-113 (VVVGAMGISWQT) are Periplasmic-facing. A helical transmembrane segment spans residues 114–133 (GMGAIFWGAVGLFLLTLFRI). Residues 134-145 (RYWMISNIPLSL) lie on the Cytoplasmic side of the membrane. A helical membrane pass occupies residues 146–166 (RIGITSGIGLFIALMGLKNTG). Residues 167–182 (VIVANKDTLVMIGDLS) are Periplasmic-facing. A helical membrane pass occupies residues 183–200 (SHGVLLGILGFFIITVLS). Residues 201 to 204 (SRHF) are Cytoplasmic-facing. The helical transmembrane segment at 205–223 (HAAVLVSIVVTSCCGLFFG) threads the bilayer. At 224–251 (DVHFSGVYSIPPDISGVIGEVDLSGALT) the chain is on the periplasmic side. The helical transmembrane segment at 252–280 (LELAGIIFSFMLINLFDSSGTLIGVTDKA) threads the bilayer. The Cytoplasmic segment spans residues 281–293 (GLIDGNGKFPNMN). The helical transmembrane segment at 294–309 (KALYVDSVSSVAGAFI) threads the bilayer. Residues 310-311 (GT) are Periplasmic-facing. Residues 312–327 (SSVTAYIESTSGVAVG) traverse the membrane as a discontinuously helical segment. Over 328 to 331 (GRTG) the chain is Cytoplasmic. A helical membrane pass occupies residues 332–346 (LTAVVVGVMFLLVMF). Topologically, residues 347–357 (FSPLVAIVPPY) are periplasmic. The helical transmembrane segment at 358-377 (ATAGALIFVGVLMTSSLARV) threads the bilayer. Topologically, residues 378-382 (NWDDF) are cytoplasmic. The discontinuously helical intramembrane region spans 383-418 (TESVPAFITTVMMPFTFSITEGIALGFMSYCIMKVC). Residues 419–444 (TGRWRDLNLCVVVVAALFALKIILVD) lie on the Cytoplasmic side of the membrane.

This sequence belongs to the nucleobase:cation symporter-2 (NCS2) (TC 2.A.40) family. Azg-like subfamily.

It localises to the cell inner membrane. Its function is as follows. High-affinity transporter for adenine. The protein is Adenine permease AdeQ (adeQ) of Escherichia coli (strain K12).